Consider the following 350-residue polypeptide: Cell division protein ZipA (350 aa).

Over 1–6 (MEDLQL) the chain is Periplasmic. A helical membrane pass occupies residues 7–27 (VLFVLGAIAIVAVLVHGFWSI). Topologically, residues 28-350 (RKQQPRTIKE…QYLARIRANA (323 aa)) are cytoplasmic. Disordered regions lie at residues 36–55 (KEQPRTPYAMSPGRRDAEGF), 65–136 (VRKL…PSAR), and 187–213 (RVPADQGQAAHSAATQAEPQAKAEEPL). Composition is skewed to basic and acidic residues over residues 65–109 (VRKL…ESRA) and 116–131 (AAHERRGHDFRHHEEP).

Belongs to the ZipA family. As to quaternary structure, interacts with FtsZ via their C-terminal domains.

The protein resides in the cell inner membrane. Its function is as follows. Essential cell division protein that stabilizes the FtsZ protofilaments by cross-linking them and that serves as a cytoplasmic membrane anchor for the Z ring. Also required for the recruitment to the septal ring of downstream cell division proteins. The protein is Cell division protein ZipA of Shewanella amazonensis (strain ATCC BAA-1098 / SB2B).